Reading from the N-terminus, the 1181-residue chain is Pesticidal crystal protein Cry1Ae (1181 aa).

Belongs to the delta endotoxin family.

In terms of biological role, promotes colloidosmotic lysis by binding to the midgut epithelial cells of many lepidopteran larvae. This chain is Pesticidal crystal protein Cry1Ae (cry1Ae), found in Bacillus thuringiensis subsp. alesti.